The following is a 526-amino-acid chain: ATP synthase subunit alpha (526 aa).

An ATP-binding site is contributed by 171–178 (GDRQTGKT).

Belongs to the ATPase alpha/beta chains family. In terms of assembly, F-type ATPases have 2 components, CF(1) - the catalytic core - and CF(0) - the membrane proton channel. CF(1) has five subunits: alpha(3), beta(3), gamma(1), delta(1), epsilon(1). CF(0) has four main subunits: a(1), b(1), b'(1) and c(9-12).

The protein resides in the cell inner membrane. The enzyme catalyses ATP + H2O + 4 H(+)(in) = ADP + phosphate + 5 H(+)(out). In terms of biological role, produces ATP from ADP in the presence of a proton gradient across the membrane. The alpha chain is a regulatory subunit. The sequence is that of ATP synthase subunit alpha from Chlorobium chlorochromatii (strain CaD3).